Reading from the N-terminus, the 157-residue chain is Arginine repressor (157 aa).

It belongs to the ArgR family.

It localises to the cytoplasm. It functions in the pathway amino-acid biosynthesis; L-arginine biosynthesis [regulation]. Its function is as follows. Regulates arginine biosynthesis genes. The chain is Arginine repressor from Deinococcus deserti (strain DSM 17065 / CIP 109153 / LMG 22923 / VCD115).